The following is a 457-amino-acid chain: MADS-box transcription factor 1 (457 aa).

The region spanning 11 to 71 (PSSPRRSIQR…NACHVYSSEE (61 aa)) is the MADS-box domain. Disordered stretches follow at residues 195–278 (SGDY…SRLH) and 295–328 (SSGY…LGQE). Residues 199 to 216 (SDSPLEPSSSSSFSVPPE) are compositionally biased toward low complexity. Residues 218-234 (LNPTLSFQHNDVPQTDN) show a composition bias toward polar residues. The segment covering 265–278 (KNRRNGKPRISRLH) has biased composition (basic residues). Positions 295-317 (SSGYLDPSSTPITPLDSAINQIT) are enriched in polar residues. The residue at position 372 (Ser372) is a Phosphoserine.

Phosphorylated. Occurs periodically during mitosis.

Its subcellular location is the nucleus. Functionally, acts as a transcriptional activator with a role in the regulation of mitosis. Regulates septation and the periodic transcription of cdc15. The sequence is that of MADS-box transcription factor 1 (mbx1) from Schizosaccharomyces pombe (strain 972 / ATCC 24843) (Fission yeast).